The primary structure comprises 176 residues: Flavodoxin-like domain-containing protein BilS (176 aa).

It participates in porphyrin-containing compound metabolism; protoheme degradation. Its function is as follows. Together with BilR, catalyzes reduction of mesobilirubin and/or bilirubin to urobilinogen, a key step during heme degradation. BilS is probably involved in electron transfer for the bilirubin reductase BilR. This is Flavodoxin-like domain-containing protein BilS from Clostridioides difficile (strain CD3).